Consider the following 415-residue polypeptide: Alpha-2Db adrenergic receptor (415 aa).

The Extracellular segment spans residues 1 to 33; it reads MDLSTITFLLPNSSEDTNGTSAPRLPPHSQCAS. 2 N-linked (GlcNAc...) asparagine glycosylation sites follow: Asn12 and Asn18. The chain crosses the membrane as a helical span at residues 34 to 58; it reads VLIVLVVTVIILVTIVGNVLVVVAV. The Cytoplasmic portion of the chain corresponds to 59–70; the sequence is FTSRALRAPQNL. Residues 71 to 96 traverse the membrane as a helical segment; the sequence is FLVSLAAADILVATLVIPFSLANEVM. Over 97–106 the chain is Extracellular; that stretch reads GYWYLGSTWC. Cys106 and Cys179 are disulfide-bonded. The helical transmembrane segment at 107 to 129 threads the bilayer; it reads AFYLALDVLFCTSSIVHLCAISL. The Cytoplasmic segment spans residues 130 to 150; the sequence is DRYWSVTKAVSYNLKRTPRRI. The helical transmembrane segment at 151 to 173 threads the bilayer; sequence KIMITVVWVISAVISFPPLLMTK. At 174–184 the chain is on the extracellular side; sequence HDELECLLNNE. Asn183 carries an N-linked (GlcNAc...) asparagine glycan. The chain crosses the membrane as a helical span at residues 185 to 208; the sequence is TWYILSSCIVSFFAPGLIMILVYC. Residues 209–339 are Cytoplasmic-facing; the sequence is RIYRVAKQRA…QMREKRFTFV (131 aa). The tract at residues 234-299 is disordered; sequence QSETCFVRKG…EGAQSCPKPN (66 aa). Over residues 276 to 286 the composition is skewed to basic residues; the sequence is NRHRNSRFAKS. Residues 340-363 form a helical membrane-spanning segment; the sequence is LAVVMGVFVLCWFPFFFTYSLHAI. Residues 364–376 lie on the Extracellular side of the membrane; the sequence is CRKSCTIPDSLFN. The helical transmembrane segment at 377 to 397 threads the bilayer; the sequence is LFFWIGYCNSSVNPIIYTIFN. Residues 398 to 415 lie on the Cytoplasmic side of the membrane; it reads RDFRKAFKKIMCRHSTRT.

The protein belongs to the G-protein coupled receptor 1 family. Adrenergic receptor subfamily. ADRA2D sub-subfamily.

The protein resides in the cell membrane. Its function is as follows. Alpha-2 adrenergic receptors mediate the catecholamine-induced inhibition of adenylate cyclase through the action of G proteins. The order of potency for this receptor is dexmedetomidine &gt; norepinephrine = epinephrine &gt; oxymetazoline. The sequence is that of Alpha-2Db adrenergic receptor (adra2db) from Danio rerio (Zebrafish).